We begin with the raw amino-acid sequence, 279 residues long: Thymidylate synthase (279 aa).

Position 37 (Arg37) interacts with dUMP. Position 67 (His67) interacts with (6R)-5,10-methylene-5,6,7,8-tetrahydrofolate. A dUMP-binding site is contributed by 142–143 (RR). Cys162 (nucleophile) is an active-site residue. Residues 182 to 185 (RSAD), Asn193, and 223 to 225 (HLY) each bind dUMP. Asp185 provides a ligand contact to (6R)-5,10-methylene-5,6,7,8-tetrahydrofolate. Ser278 lines the (6R)-5,10-methylene-5,6,7,8-tetrahydrofolate pocket.

The protein belongs to the thymidylate synthase family. Bacterial-type ThyA subfamily. In terms of assembly, homodimer.

It is found in the cytoplasm. It catalyses the reaction dUMP + (6R)-5,10-methylene-5,6,7,8-tetrahydrofolate = 7,8-dihydrofolate + dTMP. It functions in the pathway pyrimidine metabolism; dTTP biosynthesis. Catalyzes the reductive methylation of 2'-deoxyuridine-5'-monophosphate (dUMP) to 2'-deoxythymidine-5'-monophosphate (dTMP) while utilizing 5,10-methylenetetrahydrofolate (mTHF) as the methyl donor and reductant in the reaction, yielding dihydrofolate (DHF) as a by-product. This enzymatic reaction provides an intracellular de novo source of dTMP, an essential precursor for DNA biosynthesis. The sequence is that of Thymidylate synthase from Caulobacter vibrioides (strain ATCC 19089 / CIP 103742 / CB 15) (Caulobacter crescentus).